The primary structure comprises 445 residues: Probable glycine dehydrogenase (decarboxylating) subunit 1 (445 aa).

The protein belongs to the GcvP family. N-terminal subunit subfamily. The glycine cleavage system is composed of four proteins: P, T, L and H. In this organism, the P 'protein' is a heterodimer of two subunits.

The catalysed reaction is N(6)-[(R)-lipoyl]-L-lysyl-[glycine-cleavage complex H protein] + glycine + H(+) = N(6)-[(R)-S(8)-aminomethyldihydrolipoyl]-L-lysyl-[glycine-cleavage complex H protein] + CO2. Its function is as follows. The glycine cleavage system catalyzes the degradation of glycine. The P protein binds the alpha-amino group of glycine through its pyridoxal phosphate cofactor; CO(2) is released and the remaining methylamine moiety is then transferred to the lipoamide cofactor of the H protein. The sequence is that of Probable glycine dehydrogenase (decarboxylating) subunit 1 from Anaeromyxobacter dehalogenans (strain 2CP-1 / ATCC BAA-258).